The following is a 308-amino-acid chain: tRNA dimethylallyltransferase (308 aa).

Position 10-17 (10-17 (GPTASGKT)) interacts with ATP. Residue 12–17 (TASGKT) participates in substrate binding. Interaction with substrate tRNA stretches follow at residues 35–38 (DSSL) and 159–163 (QRIFR).

The protein belongs to the IPP transferase family. As to quaternary structure, monomer. Mg(2+) serves as cofactor.

The catalysed reaction is adenosine(37) in tRNA + dimethylallyl diphosphate = N(6)-dimethylallyladenosine(37) in tRNA + diphosphate. Functionally, catalyzes the transfer of a dimethylallyl group onto the adenine at position 37 in tRNAs that read codons beginning with uridine, leading to the formation of N6-(dimethylallyl)adenosine (i(6)A). The chain is tRNA dimethylallyltransferase from Francisella tularensis subsp. tularensis (strain FSC 198).